A 311-amino-acid polypeptide reads, in one-letter code: Mediator of RNA polymerase II transcription subunit 27 (311 aa).

S132 carries the phosphoserine modification. K134 is modified (N6-methyllysine).

This sequence belongs to the Mediator complex subunit 27 family. As to quaternary structure, component of the Mediator complex, which is composed of MED1, MED4, MED6, MED7, MED8, MED9, MED10, MED11, MED12, MED13, MED13L, MED14, MED15, MED16, MED17, MED18, MED19, MED20, MED21, MED22, MED23, MED24, MED25, MED26, MED27, MED29, MED30, MED31, CCNC, CDK8 and CDC2L6/CDK11. The MED12, MED13, CCNC and CDK8 subunits form a distinct module termed the CDK8 module. Mediator containing the CDK8 module is less active than Mediator lacking this module in supporting transcriptional activation. Individual preparations of the Mediator complex lacking one or more distinct subunits have been variously termed ARC, CRSP, DRIP, PC2, SMCC and TRAP.

Its subcellular location is the nucleus. Its function is as follows. Component of the Mediator complex, a coactivator involved in the regulated transcription of nearly all RNA polymerase II-dependent genes. Mediator functions as a bridge to convey information from gene-specific regulatory proteins to the basal RNA polymerase II transcription machinery. Mediator is recruited to promoters by direct interactions with regulatory proteins and serves as a scaffold for the assembly of a functional preinitiation complex with RNA polymerase II and the general transcription factors. The protein is Mediator of RNA polymerase II transcription subunit 27 (MED27) of Sus scrofa (Pig).